Here is a 366-residue protein sequence, read N- to C-terminus: Tyrosyl-DNA phosphodiesterase 2 (366 aa).

Met1 is subject to N-acetylmethionine. Positions 1–22 are enriched in low complexity; it reads MASGSSSDAAESAEPAAAPAAA. Residues 1 to 30 form a disordered region; that stretch reads MASGSSSDAAESAEPAAAPAAAETEEDQVK. Residue Lys30 forms a Glycyl lysine isopeptide (Lys-Gly) (interchain with G-Cter in SUMO2) linkage. Thr95 carries the post-translational modification Phosphothreonine; by ACVR1B. Residues 126–130 are interaction with 5' end of substrate DNA; the sequence is NIDGL. Residues Asp128 and Glu158 each contribute to the Mg(2+) site. Residues 232-237 form an interaction with 5' end of substrate DNA region; the sequence is HLESTR. Asp268 acts as the Proton donor/acceptor in catalysis. The tract at residues 270–272 is interaction with 5' end of substrate DNA; that stretch reads NLR.

The protein belongs to the CCR4/nocturin family. As to quaternary structure, interacts with TRAF2, TRAF3, TRAF5, TRAF6, TNFRSF8/CD30, TNFRSF5/CD40, TNFRSF1B/TNF-R75, ETS1, ETS2, FLI1, SMAD3 and ACVR1B/ALK4. It depends on Mg(2+) as a cofactor. Requires Mn(2+) as cofactor. Post-translationally, ubiquitinated by TRAF6.

Its subcellular location is the nucleus. The protein localises to the PML body. It is found in the nucleolus. It localises to the cytoplasm. Its function is as follows. DNA repair enzyme that can remove a variety of covalent adducts from DNA through hydrolysis of a 5'-phosphodiester bond, giving rise to DNA with a free 5' phosphate. Catalyzes the hydrolysis of dead-end complexes between DNA and the topoisomerase 2 (TOP2) active site tyrosine residue. The 5'-tyrosyl DNA phosphodiesterase activity can enable the repair of TOP2-induced DNA double-strand breaks/DSBs without the need for nuclease activity, creating a 'clean' DSB with 5'-phosphate termini that are ready for ligation. Thereby, protects the transcription of many genes involved in neurological development and maintenance from the abortive activity of TOP2. Hydrolyzes 5'-phosphoglycolates on protruding 5' ends on DSBs due to DNA damage by radiation and free radicals. Has preference for single-stranded DNA or duplex DNA with a 4 base pair overhang as substrate. Also has 3'-tyrosyl DNA phosphodiesterase activity, but less efficiently and much slower than TDP1. Constitutes the major if not only 5'-tyrosyl-DNA phosphodiesterase in cells. Also acts as an adapter by participating in the specific activation of MAP3K7/TAK1 in response to TGF-beta: associates with components of the TGF-beta receptor-TRAF6-TAK1 signaling module and promotes their ubiquitination dependent complex formation. Involved in non-canonical TGF-beta induced signaling routes. May also act as a negative regulator of ETS1 and may inhibit NF-kappa-B activation. Acts as a regulator of ribosome biogenesis following stress. This is Tyrosyl-DNA phosphodiesterase 2 (Tdp2) from Rattus norvegicus (Rat).